The following is a 202-amino-acid chain: Putative transposon Tn552 DNA-invertase bin3 (202 aa).

One can recognise a Resolvase/invertase-type recombinase catalytic domain in the interval 1 to 143 (MIIGYARVSS…QGIQVAKEKG (143 aa)). Ser-9 (O-(5'-phospho-DNA)-serine intermediate) is an active-site residue.

The protein belongs to the site-specific recombinase resolvase family.

Functionally, potential DNA invertase. The chain is Putative transposon Tn552 DNA-invertase bin3 (bin3) from Staphylococcus aureus.